Reading from the N-terminus, the 252-residue chain is Cell division protein ZapD (252 aa).

The protein belongs to the ZapD family. Interacts with FtsZ.

The protein localises to the cytoplasm. Functionally, cell division factor that enhances FtsZ-ring assembly. Directly interacts with FtsZ and promotes bundling of FtsZ protofilaments, with a reduction in FtsZ GTPase activity. This Dechloromonas aromatica (strain RCB) protein is Cell division protein ZapD.